Reading from the N-terminus, the 361-residue chain is D-alanine--D-alanine ligase (361 aa).

Residues 134 to 344 (KLLLKSFDIP…FKDLVDNLID (211 aa)) form the ATP-grasp domain. Residue 167 to 222 (KEVLGYPVIVKPAVLGSSIGINVAYSENQIESFIKEALKYDLTIVIEKFIEAREIE) coordinates ATP. 3 residues coordinate Mg(2+): D297, E311, and N313.

It belongs to the D-alanine--D-alanine ligase family. Mg(2+) serves as cofactor. Mn(2+) is required as a cofactor.

It localises to the cytoplasm. It catalyses the reaction 2 D-alanine + ATP = D-alanyl-D-alanine + ADP + phosphate + H(+). Its pathway is cell wall biogenesis; peptidoglycan biosynthesis. Cell wall formation. This Borreliella burgdorferi (strain ZS7) (Borrelia burgdorferi) protein is D-alanine--D-alanine ligase.